We begin with the raw amino-acid sequence, 78 residues long: Conotoxin CaFr179 (78 aa).

The N-terminal stretch at 1–19 (MSGLGIMVLTLLLLVFMEA) is a signal peptide. Residues 20–44 (SHQDAGEKQATQRDAINVRRRRSLA) constitute a propeptide that is removed on maturation. Disulfide bonds link Cys52-Cys64, Cys56-Cys72, and Cys63-Cys76. A Phenylalanine amide modification is found at Phe77.

The protein belongs to the conotoxin O3 superfamily. As to expression, expressed by the venom duct.

It localises to the secreted. The polypeptide is Conotoxin CaFr179 (Conus caracteristicus (Characteristic cone)).